A 780-amino-acid polypeptide reads, in one-letter code: GATOR2 complex protein WDR24 (780 aa).

6 WD repeats span residues 67–107, 113–153, 156–196, 200–240, 244–286, and 290–333; these read SLNF…RNKQ, EHKR…SVST, GQSE…RCER, AHNG…AKEI, QTIA…IPFA, and EHKD…IDRA. The segment at 708 to 730 adopts a C4-type zinc-finger fold; sequence NCSNCKRPMSNKGWICDRCRQCA. Residues Cys709, Cys712, Cys723, Cys726, Cys733, Cys736, Cys747, Cys750, His752, His755, His758, Cys769, Cys773, His775, and Cys777 each contribute to the Zn(2+) site. The segment at 731–780 adopts an RING-type; atypical zinc-finger fold; it reads SMCAVCHHVVKGLFVWCQGCCHGGHLQHIMNWMQNNCYCPAGCGHVCEYS.

It belongs to the WD repeat WDR24 family. In terms of assembly, component of the GATOR2 subcomplex, composed of MIOS, SEC13, SEH1L, WDR24 and WDR59. The GATOR2 complex interacts with CASTOR1 and CASTOR2; the interaction is negatively regulated by arginine. The GATOR2 complex interacts with SESN1, SESN2 and SESN3; the interaction is negatively regulated by amino acids.

The protein localises to the lysosome membrane. The catalysed reaction is S-ubiquitinyl-[E2 ubiquitin-conjugating enzyme]-L-cysteine + [acceptor protein]-L-lysine = [E2 ubiquitin-conjugating enzyme]-L-cysteine + N(6)-ubiquitinyl-[acceptor protein]-L-lysine.. It participates in protein modification; protein ubiquitination. The GATOR2 complex is negatively regulated by the upstream amino acid sensors CASTOR1 and SESN2, which sequester the GATOR2 complex in absence of amino acids. In the presence of abundant amino acids, GATOR2 is released from CASTOR1 and SESN2 and activated. Catalytic component of the GATOR2 complex, a multiprotein complex that acts as an activator of the amino acid-sensing branch of the mTORC1 signaling pathway. The GATOR2 complex indirectly activates mTORC1 through the inhibition of the GATOR1 subcomplex. GATOR2 probably acts as an E3 ubiquitin-protein ligase toward GATOR1. In the presence of abundant amino acids, the GATOR2 complex mediates ubiquitination of the NPRL2 core component of the GATOR1 complex, leading to GATOR1 inactivation. In the absence of amino acids, GATOR2 is inhibited, activating the GATOR1 complex. In addition to its role in regulation of the mTORC1 complex, promotes the acidification of lysosomes and facilitates autophagic flux. Within the GATOR2 complex, WDR24 constitutes the catalytic subunit that mediates 'Lys-6'-linked ubiquitination of NPRL2. This chain is GATOR2 complex protein WDR24, found in Xenopus laevis (African clawed frog).